Consider the following 199-residue polypeptide: Probable molybdenum cofactor guanylyltransferase (199 aa).

Residues 9 to 11 (LAG), K21, D69, and D100 contribute to the GTP site. D100 contacts Mg(2+).

Belongs to the MobA family. Mg(2+) serves as cofactor.

It localises to the cytoplasm. The catalysed reaction is Mo-molybdopterin + GTP + H(+) = Mo-molybdopterin guanine dinucleotide + diphosphate. Transfers a GMP moiety from GTP to Mo-molybdopterin (Mo-MPT) cofactor (Moco or molybdenum cofactor) to form Mo-molybdopterin guanine dinucleotide (Mo-MGD) cofactor. This Bacillus cytotoxicus (strain DSM 22905 / CIP 110041 / 391-98 / NVH 391-98) protein is Probable molybdenum cofactor guanylyltransferase.